The sequence spans 174 residues: uncharacterized protein (174 aa).

The tract at residues 78-97 (TFGRNIKTPDISNPTRARNE) is disordered.

To yeast YMR295c.

This is an uncharacterized protein from Saccharomyces cerevisiae (strain ATCC 204508 / S288c) (Baker's yeast).